The primary structure comprises 389 residues: Alpha-2B adrenergic receptor (389 aa).

Residues 1–25 (AIAAVITFLILFTIFGNALVILAVL) traverse the membrane as a helical segment. The Cytoplasmic portion of the chain corresponds to 26-36 (TSRSLRAPQNL). A helical transmembrane segment spans residues 37–62 (FLVSLAAADILVATLIIPFSLANELL). Residues 63–72 (GYWYFRRTWC) lie on the Extracellular side of the membrane. Residues Cys-72 and Cys-151 are joined by a disulfide bond. A helical membrane pass occupies residues 73-95 (EVYLALDVLFCTSSIVHLCAISL). The Cytoplasmic portion of the chain corresponds to 96–117 (DRYWAVTRALEYNTKRTPRRIK). Residues 118–140 (CIILTVWLIAAVISLPPLIYKGD) traverse the membrane as a helical segment. The Extracellular portion of the chain corresponds to 141–156 (QGPQPRGRPQCKLNQE). A helical transmembrane segment spans residues 157–180 (AWYILASSIGSFFAPCLIMILVYL). The Cytoplasmic portion of the chain corresponds to 181-363 (RIYLIAKRSH…LTREKRFTFV (183 aa)). Disordered regions lie at residues 194–216 (PRAK…AGAS) and 233–320 (EANG…PLQQ). The span at 196–205 (AKGGPGGGGS) shows a compositional bias: gly residues. The span at 255–267 (PALPSSWPALPSS) shows a compositional bias: low complexity. Residues 280-302 (LEEEAEEEEEEEEEEEEGEEECE) show a composition bias toward acidic residues. Positions 303–320 (PQALPASPASACSPPLQQ) are enriched in low complexity. Residues 364-387 (LAVVIGVFVLCWFPFFFSYSLGAI) form a helical membrane-spanning segment. Topologically, residues 388–389 (CP) are extracellular.

Belongs to the G-protein coupled receptor 1 family. Adrenergic receptor subfamily. ADRA2B sub-subfamily. Interacts with RAB26. Interacts with PPP1R9B. Interacts with GGA1, GGA2 and GGA3.

The protein resides in the cell membrane. In terms of biological role, alpha-2 adrenergic receptors mediate the catecholamine-induced inhibition of adenylate cyclase through the action of G proteins. This chain is Alpha-2B adrenergic receptor (ADRA2B), found in Equus caballus (Horse).